Reading from the N-terminus, the 681-residue chain is Potassium-transporting ATPase ATP-binding subunit (681 aa).

The next 4 membrane-spanning stretches (helical) occupy residues 30–50, 59–79, 216–236, and 255–275; these read LLVY…FFGI, LAIA…EAIA, ILLV…LPFT, and IALL…SIGI. Asp306 acts as the 4-aspartylphosphate intermediate in catalysis. ATP is bound by residues Asp343, Glu347, 376–383, and Lys394; that span reads FTATTRMS. Residues Asp517 and Asp521 each coordinate Mg(2+). Transmembrane regions (helical) follow at residues 587-607, 615-635, and 661-681; these read FAII…LNLM, AILS…PLSL, and LIAP…LGIV.

This sequence belongs to the cation transport ATPase (P-type) (TC 3.A.3) family. Type IA subfamily. The system is composed of three essential subunits: KdpA, KdpB and KdpC.

It is found in the cell membrane. It carries out the reaction K(+)(out) + ATP + H2O = K(+)(in) + ADP + phosphate + H(+). Functionally, part of the high-affinity ATP-driven potassium transport (or Kdp) system, which catalyzes the hydrolysis of ATP coupled with the electrogenic transport of potassium into the cytoplasm. This subunit is responsible for energy coupling to the transport system and for the release of the potassium ions to the cytoplasm. The sequence is that of Potassium-transporting ATPase ATP-binding subunit from Listeria monocytogenes serovar 1/2a (strain ATCC BAA-679 / EGD-e).